A 243-amino-acid polypeptide reads, in one-letter code: Orotidine 5'-phosphate decarboxylase (243 aa).

Substrate contacts are provided by residues aspartate 18, lysine 39, 66-75 (DLKFHDIPAT), threonine 130, arginine 192, glutamine 201, glycine 221, and arginine 222. Lysine 68 (proton donor) is an active-site residue.

Belongs to the OMP decarboxylase family. Type 1 subfamily. As to quaternary structure, homodimer.

The catalysed reaction is orotidine 5'-phosphate + H(+) = UMP + CO2. It participates in pyrimidine metabolism; UMP biosynthesis via de novo pathway; UMP from orotate: step 2/2. Its function is as follows. Catalyzes the decarboxylation of orotidine 5'-monophosphate (OMP) to uridine 5'-monophosphate (UMP). The chain is Orotidine 5'-phosphate decarboxylase from Synechococcus sp. (strain CC9902).